Consider the following 695-residue polypeptide: Elongation factor G (695 aa).

The region spanning 12–286 is the tr-type G domain; the sequence is DKLRNIGIMA…AVIDYLPSPL (275 aa). GTP-binding positions include 21–28, 85–89, and 139–142; these read AHIDAGKT, DTPGH, and NKMD.

It belongs to the TRAFAC class translation factor GTPase superfamily. Classic translation factor GTPase family. EF-G/EF-2 subfamily.

The protein localises to the cytoplasm. Functionally, catalyzes the GTP-dependent ribosomal translocation step during translation elongation. During this step, the ribosome changes from the pre-translocational (PRE) to the post-translocational (POST) state as the newly formed A-site-bound peptidyl-tRNA and P-site-bound deacylated tRNA move to the P and E sites, respectively. Catalyzes the coordinated movement of the two tRNA molecules, the mRNA and conformational changes in the ribosome. In Thermotoga petrophila (strain ATCC BAA-488 / DSM 13995 / JCM 10881 / RKU-1), this protein is Elongation factor G.